The sequence spans 387 residues: Structural protein ORF387 (387 aa).

The stretch at 315–387 (KTFQEMVKVA…EEKNNTVKLS (73 aa)) forms a coiled coil. Residues 365-387 (LTEEQQQQNETEEEEKNNTVKLS) are disordered.

The protein localises to the virion. The protein is Structural protein ORF387 of Acidianus convivator (ATV).